A 121-amino-acid polypeptide reads, in one-letter code: NADPH-dependent 7-cyano-7-deazaguanine reductase (121 aa).

Residue cysteine 36 is the Thioimide intermediate of the active site. Aspartate 43 (proton donor) is an active-site residue. Residues 58–60 (VEL) and 77–78 (YE) contribute to the substrate site.

The protein belongs to the GTP cyclohydrolase I family. QueF type 1 subfamily.

The protein resides in the cytoplasm. It catalyses the reaction 7-aminomethyl-7-carbaguanine + 2 NADP(+) = 7-cyano-7-deazaguanine + 2 NADPH + 3 H(+). The protein operates within tRNA modification; tRNA-queuosine biosynthesis. Its function is as follows. Catalyzes the NADPH-dependent reduction of 7-cyano-7-deazaguanine (preQ0) to 7-aminomethyl-7-deazaguanine (preQ1). This Rhodopirellula baltica (strain DSM 10527 / NCIMB 13988 / SH1) protein is NADPH-dependent 7-cyano-7-deazaguanine reductase.